Here is a 217-residue protein sequence, read N- to C-terminus: 3,4-dihydroxy-2-butanone 4-phosphate synthase (217 aa).

D-ribulose 5-phosphate-binding positions include 37–38, Asp42, 150–154, and Glu174; these read RE and RRGHT. Glu38 contributes to the Mg(2+) binding site. His153 is a Mg(2+) binding site.

Belongs to the DHBP synthase family. As to quaternary structure, homodimer. Mg(2+) is required as a cofactor. It depends on Mn(2+) as a cofactor.

The catalysed reaction is D-ribulose 5-phosphate = (2S)-2-hydroxy-3-oxobutyl phosphate + formate + H(+). Its pathway is cofactor biosynthesis; riboflavin biosynthesis; 2-hydroxy-3-oxobutyl phosphate from D-ribulose 5-phosphate: step 1/1. In terms of biological role, catalyzes the conversion of D-ribulose 5-phosphate to formate and 3,4-dihydroxy-2-butanone 4-phosphate. This is 3,4-dihydroxy-2-butanone 4-phosphate synthase from Tolumonas auensis (strain DSM 9187 / NBRC 110442 / TA 4).